We begin with the raw amino-acid sequence, 601 residues long: Deoxyhypusine synthase (601 aa).

Residues 109–113 (ANLMG) and 184–186 (SGG) each bind NAD(+). Residue 189 to 190 (EH) coordinates spermidine. Residues 210–242 (GHVSSTVSSEATAPPKGLQQRAEKPLGTRAAAG) are disordered. Residues 211 to 220 (HVSSTVSSEA) are compositionally biased toward polar residues. Residue Asp-398 participates in NAD(+) binding. Residues 411-451 (PAARPAHRKGGPVADENAGNSKELKRSRKASSSSSTSATAV) form a disordered region. Low complexity predominate over residues 440–451 (ASSSSSTSATAV). Gly-489 is a binding site for NAD(+). Position 494 (His-494) interacts with spermidine. An NAD(+)-binding site is contributed by 514-515 (NG). Spermidine is bound by residues 520 to 522 (GSD) and 529 to 535 (EALSWGK). Lys-535 functions as the Nucleophile in the catalytic mechanism. Residue 548–549 (EV) coordinates NAD(+). The tract at residues 568 to 601 (RRATDDAQPRRKRSSRGARPPQDVSGHSHLCRGE) is disordered.

Belongs to the deoxyhypusine synthase family. As to quaternary structure, homodimer. NAD(+) is required as a cofactor.

The enzyme catalyses [eIF5A protein]-L-lysine + spermidine = [eIF5A protein]-deoxyhypusine + propane-1,3-diamine. It participates in protein modification; eIF5A hypusination. With respect to regulation, N1-guanyl-1,7-diaminoheptane has a small inhibitory effect on activity. Functionally, catalyzes the NAD-dependent oxidative cleavage of spermidine and the subsequent transfer of the butylamine moiety of spermidine to the epsilon-amino group of a specific lysine residue of the eIF-5A precursor protein to form the intermediate deoxyhypusine residue. The sequence is that of Deoxyhypusine synthase from Leishmania donovani.